A 62-amino-acid polypeptide reads, in one-letter code: DNA-directed RNA polymerase subunit Rpo10 (62 aa).

Cys-6, Cys-9, Cys-43, and Cys-44 together coordinate Zn(2+).

Belongs to the archaeal Rpo10/eukaryotic RPB10 RNA polymerase subunit family. As to quaternary structure, part of the RNA polymerase complex. It depends on Zn(2+) as a cofactor.

It is found in the cytoplasm. The catalysed reaction is RNA(n) + a ribonucleoside 5'-triphosphate = RNA(n+1) + diphosphate. DNA-dependent RNA polymerase (RNAP) catalyzes the transcription of DNA into RNA using the four ribonucleoside triphosphates as substrates. The polypeptide is DNA-directed RNA polymerase subunit Rpo10 (Methanosphaerula palustris (strain ATCC BAA-1556 / DSM 19958 / E1-9c)).